The primary structure comprises 100 residues: Vesicle-associated membrane protein 8 (100 aa).

At 1-74 the chain is on the cytoplasmic side; that stretch reads MEASGSAGND…ARKFWWKNVK (74 aa). Residues Ser4 and Ser17 each carry the phosphoserine modification. The v-SNARE coiled-coil homology domain maps to 11 to 71; it reads RVRNLQSEVE…QKVARKFWWK (61 aa). Phosphothreonine is present on residues Thr27, Thr47, and Thr53. Phosphoserine is present on Ser54. The chain crosses the membrane as a helical; Anchor for type IV membrane protein span at residues 75-95; the sequence is MIVIICVIVLIILILIILFAT. Residues 96–100 lie on the Vesicular side of the membrane; it reads GTIPT.

This sequence belongs to the synaptobrevin family. As to quaternary structure, forms a SNARE complex composed of VAMP8, SNAP29 and STX17 involved in fusion of autophagosome with lysosome. Found in a number of SNARE complexes with NAPA, SNAP23, SNAP25, STX1A, STX4, STX7, STX8 and VTI1B. Interacts with PICALM. SNARE complex formation and binding by PICALM are mutually exclusive processes for VAMP8. Interacts with SBF2/MTMR13. Interacts with RAB21 (in GTP-bound form) in response to starvation; the interaction probably regulates VAMP8 endolysosomal trafficking. Interacts with STX17; this interaction is increased in the absence of TMEM39A. Interacts with TRIM6. In terms of tissue distribution, expressed (at protein level) at a high level in kidney, lung and spleen; at a lower level in testis, liver, brain and heart. Expressed in kidney and retinal pigment epithelium derived cell line.

The protein localises to the lysosome membrane. The protein resides in the late endosome membrane. It localises to the early endosome membrane. Its subcellular location is the midbody. It is found in the cell membrane. The protein localises to the zymogen granule membrane. Its function is as follows. SNAREs, soluble N-ethylmaleimide-sensitive factor-attachment protein receptors, are essential proteins for fusion of cellular membranes. SNAREs localized on opposing membranes assemble to form a trans-SNARE complex, an extended, parallel four alpha-helical bundle that drives membrane fusion. VAMP8 is a SNARE involved in autophagy through the direct control of autophagosome membrane fusion with the lysososome membrane via its interaction with the STX17-SNAP29 binary t-SNARE complex. Also required for dense-granule secretion in platelets. Also plays a role in regulated enzyme secretion in pancreatic acinar cells. Involved in the abscission of the midbody during cell division, which leads to completely separate daughter cells. Involved in the homotypic fusion of early and late endosomes. Also participates in the activation of type I interferon antiviral response through a TRIM6-dependent mechanism. The polypeptide is Vesicle-associated membrane protein 8 (Rattus norvegicus (Rat)).